The primary structure comprises 418 residues: Tyrosine--tRNA ligase (418 aa).

Position 34 (Tyr34) interacts with L-tyrosine. A 'HIGH' region motif is present at residues 39–48 (PTGDSMHIGH). Residues Tyr166 and Gln170 each coordinate L-tyrosine. The 'KMSKS' region motif lies at 228–232 (KFGKT). An ATP-binding site is contributed by Lys231. The S4 RNA-binding domain occupies 350 to 417 (TNIVELLTET…KKNYFLAKVK (68 aa)).

This sequence belongs to the class-I aminoacyl-tRNA synthetase family. TyrS type 1 subfamily. As to quaternary structure, homodimer.

It is found in the cytoplasm. The catalysed reaction is tRNA(Tyr) + L-tyrosine + ATP = L-tyrosyl-tRNA(Tyr) + AMP + diphosphate + H(+). Catalyzes the attachment of tyrosine to tRNA(Tyr) in a two-step reaction: tyrosine is first activated by ATP to form Tyr-AMP and then transferred to the acceptor end of tRNA(Tyr). This is Tyrosine--tRNA ligase from Levilactobacillus brevis (Lactobacillus brevis).